A 318-amino-acid polypeptide reads, in one-letter code: Ribosome biogenesis protein RLP7 (318 aa).

2 disordered regions span residues 1 to 49 (MSQP…NRFV) and 101 to 121 (AGSKATSESELQDVDEEDEED). Basic and acidic residues predominate over residues 19-40 (ADRTRLEKQELAKKRKEQEEKQ). The span at 110-121 (ELQDVDEEDEED) shows a compositional bias: acidic residues.

This sequence belongs to the universal ribosomal protein uL30 family.

Its subcellular location is the nucleus. It localises to the nucleolus. In terms of biological role, involved in the biogenesis of the 60S ribosomal subunit. May act as a specificity factor that binds precursor rRNAs and tethers the enzymes that carry out the early 5' to 3' exonucleolytic reactions that generate the mature rRNAs. This chain is Ribosome biogenesis protein RLP7 (RLP7), found in Kluyveromyces lactis (strain ATCC 8585 / CBS 2359 / DSM 70799 / NBRC 1267 / NRRL Y-1140 / WM37) (Yeast).